The following is a 356-amino-acid chain: Heparan sulfate 2-O-sulfotransferase 1 (356 aa).

The Cytoplasmic portion of the chain corresponds to 1–11; it reads MGLLRIMMPPK. The chain crosses the membrane as a helical; Signal-anchor for type II membrane protein span at residues 12–28; sequence LQLLAVVAFAVAMLFLE. Residues 24–51 adopt a coiled-coil conformation; that stretch reads MLFLENQIQKLEESRAKLERAIARHEVR. Residues 29 to 356 are Lumenal-facing; the sequence is NQIQKLEESR…FYEKIYPKSN (328 aa). Adenosine 3',5'-bisphosphate is bound by residues lysine 83, threonine 84, alanine 85, serine 86, threonine 87, and serine 88. 2 N-linked (GlcNAc...) asparagine glycosylation sites follow: asparagine 108 and asparagine 127. Catalysis depends on residues histidine 140 and histidine 142. Adenosine 3',5'-bisphosphate is bound by residues arginine 164 and serine 172. Cystine bridges form between cysteine 201/cysteine 209 and cysteine 222/cysteine 228. Residues tyrosine 279, serine 285, threonine 290, and lysine 293 each contribute to the adenosine 3',5'-bisphosphate site.

The protein belongs to the sulfotransferase 3 family. In terms of assembly, homotrimer. Interacts with the C5-epimerase GLCE. N-glycosylated.

It localises to the golgi apparatus membrane. In terms of biological role, catalyzes the transfer of a sulfo group from 3'-phospho-5'-adenylyl sulfate (PAPS) to the 2-OH position of iduronic acid (IdoA) or glucuronic acid (GlcA) within the heparan sulfate (HS) chain and participates in HS biosynthesis. Required for metanephric development of kidney formation, suggesting that 2-O-sulfation within HS is essential for signaling between ureteric bud and metanephric mesenchyme. The chain is Heparan sulfate 2-O-sulfotransferase 1 from Cricetulus griseus (Chinese hamster).